The sequence spans 387 residues: Aminodeoxyfutalosine deaminase (387 aa).

Positions 1-10 (MRPAYDDPRT) are enriched in basic and acidic residues. Residues 1-37 (MRPAYDDPRTTDQPITRARPPPRAARGRRLGEEPLTE) are disordered. His61 and His63 together coordinate Zn(2+). Substrate is bound by residues Arg116, Asp183, and Gly217. A Zn(2+)-binding site is contributed by His244. The active-site Proton donor is the Glu247. Asp325 contributes to the Zn(2+) binding site.

This sequence belongs to the metallo-dependent hydrolases superfamily. Adenosine and AMP deaminases family. Zn(2+) is required as a cofactor.

It catalyses the reaction 6-amino-6-deoxyfutalosine + H2O + H(+) = futalosine + NH4(+). It participates in quinol/quinone metabolism; menaquinone biosynthesis. Its function is as follows. Catalyzes the deamination of aminodeoxyfutalosine (AFL) into futalosine (FL), a step in the biosynthesis of menaquinone (MK, vitamin K2). In Streptomyces coelicolor (strain ATCC BAA-471 / A3(2) / M145), this protein is Aminodeoxyfutalosine deaminase.